A 345-amino-acid polypeptide reads, in one-letter code: Linoleate 10R-lipoxygenase COP4 (345 aa).

Mg(2+) contacts are provided by aspartate 87, aspartate 91, asparagine 222, serine 226, and glutamate 230. The short motif at 87–91 is the DDXXD motif element; sequence DEISD.

It belongs to the terpene synthase family. Requires Mg(2+) as cofactor.

It catalyses the reaction (2E,6E)-farnesyl diphosphate + H2O = cubebol + diphosphate. The catalysed reaction is (2E,6E)-farnesyl diphosphate = beta-copaene + diphosphate. It carries out the reaction (2E,6E)-farnesyl diphosphate = beta-cubebene + diphosphate. The enzyme catalyses (2E,6E)-farnesyl diphosphate = (+)-sativene + diphosphate. In terms of biological role, sesquiterpene synthase that catalyzes the cyclization of farnesyl diphosphate (FPP) into multiple products, including germacrene D, beta-copaene, beta-cubebene, (+)-sativene and cubebol, a natural sesquiterpene alcohol used in the food industry for its cooling and refreshing taste. Terpenoid hydrocarbons resulting from cyclization of farnesyl diphosphate are intermediates in the biosynthesis of biologically active compounds such as antibiotics, toxins and pheromones. The polypeptide is Linoleate 10R-lipoxygenase COP4 (COP4) (Coprinopsis cinerea (strain Okayama-7 / 130 / ATCC MYA-4618 / FGSC 9003) (Inky cap fungus)).